The chain runs to 222 residues: Cysteine protease inhibitor 1 (222 aa).

Residues 1-26 form the signal peptide; the sequence is MKSINILSFLLLSSTLSLVAFARSFT. The propeptide occupies 27–42; the sequence is SENPIVLPTTCHDDDN. Positions 29-34 match the Vacuolar targeting signal motif; the sequence is NPIVLP. Disulfide bonds link Cys-84-Cys-136 and Cys-185-Cys-191.

Belongs to the protease inhibitor I3 (leguminous Kunitz-type inhibitor) family. Tubers, leaves.

It localises to the vacuole. Functionally, potent inhibitor of cathepsin l (cysteine protease). Does not inhibit trypsin or chymotrypsin (serine proteases). May protect the plant by inhibiting proteases of invading organisms. The protein is Cysteine protease inhibitor 1 of Solanum tuberosum (Potato).